We begin with the raw amino-acid sequence, 97 residues long: Acylphosphatase (97 aa).

One can recognise an Acylphosphatase-like domain in the interval 3 to 97 (KVKMIVSGRV…PDFTDFNIKY (95 aa)). Catalysis depends on residues Arg-18 and Asn-36.

This sequence belongs to the acylphosphatase family.

It carries out the reaction an acyl phosphate + H2O = a carboxylate + phosphate + H(+). This is Acylphosphatase (acyP) from Lactococcus lactis subsp. lactis (strain IL1403) (Streptococcus lactis).